Reading from the N-terminus, the 588-residue chain is Sulfite reductase [NADPH] hemoprotein beta-component (588 aa).

Residues Cys-442, Cys-448, Cys-487, and Cys-491 each coordinate [4Fe-4S] cluster. Cys-491 provides a ligand contact to siroheme.

This sequence belongs to the nitrite and sulfite reductase 4Fe-4S domain family. As to quaternary structure, alpha(8)-beta(8). The alpha component is a flavoprotein, the beta component is a hemoprotein. It depends on siroheme as a cofactor. [4Fe-4S] cluster is required as a cofactor.

The enzyme catalyses hydrogen sulfide + 3 NADP(+) + 3 H2O = sulfite + 3 NADPH + 4 H(+). It functions in the pathway sulfur metabolism; hydrogen sulfide biosynthesis; hydrogen sulfide from sulfite (NADPH route): step 1/1. Its function is as follows. Component of the sulfite reductase complex that catalyzes the 6-electron reduction of sulfite to sulfide. This is one of several activities required for the biosynthesis of L-cysteine from sulfate. In Actinobacillus pleuropneumoniae serotype 7 (strain AP76), this protein is Sulfite reductase [NADPH] hemoprotein beta-component.